Consider the following 1151-residue polypeptide: MSFSQLEQNIKKKIAVEENIIRGASALKKKTSNVMVIQKCNTNIREARQNLEYLEDSLKKLRLKTAQQSQGENGSEDNERCNSKEYGFLSTKSPNEHIFSRLDLVKYDCPSLAQRIQYMLQQLEFKLQVEKQYQEANTKLTKLYQIDGDQRSSSAAEGGAMESKYRIQMLNKALKKYQAINVDFDQFKHQPNDIMDNQQPKFRRKQLTGVLTIGITAARDVDHIQSPMFARKPESYVTIKIDDTIKARTKPSRNDRWSEDFQIPVEKGNEIEITVYDKVNDSLIPVAIMWLLLSDIAEEIRKKKAGQTNEQQGWVNASNINGGSSLASEEGSTLTSTYSNSAIQSTSAKNVQGENTSTSQISTNSWFVLEPSGQILLTLGFHKSSQIERKQLMGGLHRHGAIINRKEEIFEQHGHHFVQKSFYNIMCCAYCGDFLRYTGFQCQDCKFLCHKKCYTNVVTKCIAKTSTDTDPDEAKLNHRIPHRFLPTSNRGTKWCCHCGYILPWGRHKVRKCSECGIMCHAQCAHLVPDFCGMSMEMANKILKTIQDTKRNQEKKKRTVPSAQLGSSIGTANGSDLSPSKLAERANAPLPPQPRKHDKTPSPQKVGRDSPTKQHDPIIDKRISLQTHGREKLNKFIDENEAYLNFTEGAQQTAEFSSPEKTLDPTSNRRSLGLTDLSIEHSQTWESKDDLMRDELELWKAQREEMELEIKQDSGEIQEDLEVDHIDLETKQKLDWENKNDFREADLTIDSTHTNPFRDMNSETFQIEQDHASKEVLQETVSLAPTSTHASRTTDQQSPQKSQTSTSAKHKKRAAKRRKVSLDNFVLLKVLGKGNFGKVILSKSKNTDRLCAIKVLKKDNIIQNHDIESARAEKKVFLLATKTKHPFLTNLYCSFQTENRIYFAMEFIGGGDLMWHVQNQRLSVRRAKFYAAEVLLALKYFHDNGVIYRDLKLENILLTPEGHIKIADYGLCKDEMWYGNRTSTFCGTPEFMAPEILKEQEYTKAVDWWAFGVLLYQMLLCQSPFSGDDEDEVFNAILTDEPLYPIDMAGEIVQIFQGLLTKDPEKRLGAGPRDADEVMEEPFFRNINFDDILNLRVKPPYIPEIKSPEDTSYFEQEFTSAPPTLTPLPSVLTTSQQEEFRGFSFMPDDLDL.

REM-1 domains lie at 1-67 (MSFS…KTAQ) and 106-183 (KYDC…INVD). Residues 64 to 88 (KTAQQSQGENGSEDNERCNSKEYGF) form a disordered region. The C2 domain occupies 190 to 309 (QPNDIMDNQQ…IRKKKAGQTN (120 aa)). Residue S226 is modified to Phosphoserine. Positions 306-331 (GQTNEQQGWVNASNINGGSSLASEEG) are disordered. Phorbol-ester/DAG-type zinc fingers lie at residues 414-461 (GHHF…VTKC) and 481-531 (PHRF…PDFC). Disordered stretches follow at residues 546–620 (QDTK…IIDK) and 649–669 (AQQT…SNRR). Residues 560-577 (PSAQLGSSIGTANGSDLS) are compositionally biased toward polar residues. The span at 605-620 (VGRDSPTKQHDPIIDK) shows a compositional bias: basic and acidic residues. S761 is modified (phosphoserine). The segment at 782–816 (LAPTSTHASRTTDQQSPQKSQTSTSAKHKKRAAKR) is disordered. The span at 792–806 (TTDQQSPQKSQTSTS) shows a compositional bias: low complexity. The segment covering 807 to 816 (AKHKKRAAKR) has biased composition (basic residues). A Protein kinase domain is found at 824-1083 (FVLLKVLGKG…ADEVMEEPFF (260 aa)). ATP contacts are provided by residues 830–838 (LGKGNFGKV) and K853. Residue D949 is the Proton acceptor of the active site. The AGC-kinase C-terminal domain occupies 1084–1151 (RNINFDDILN…FSFMPDDLDL (68 aa)).

This sequence belongs to the protein kinase superfamily. AGC Ser/Thr protein kinase family. PKC subfamily.

It catalyses the reaction L-seryl-[protein] + ATP = O-phospho-L-seryl-[protein] + ADP + H(+). The catalysed reaction is L-threonyl-[protein] + ATP = O-phospho-L-threonyl-[protein] + ADP + H(+). Functionally, required for cell growth and for the G2-&gt;M transition of the cell division cycle. Mediates a protein kinase cascade; it activates BCK1 which itself activates MKK1/MKK2. The sequence is that of Protein kinase C-like 1 (PKC1) from Saccharomyces cerevisiae (strain ATCC 204508 / S288c) (Baker's yeast).